The primary structure comprises 363 residues: Spermidine/putrescine import ATP-binding protein PotA (363 aa).

One can recognise an ABC transporter domain in the interval 5-236 (IKLKHVRKEY…PVNDFVARFI (232 aa)). Residue 38-45 (GPSGSGKT) participates in ATP binding.

The protein belongs to the ABC transporter superfamily. Spermidine/putrescine importer (TC 3.A.1.11.1) family. As to quaternary structure, the complex is composed of two ATP-binding proteins (PotA), two transmembrane proteins (PotB and PotC) and a solute-binding protein (PotD).

Its subcellular location is the cell membrane. The enzyme catalyses ATP + H2O + polyamine-[polyamine-binding protein]Side 1 = ADP + phosphate + polyamineSide 2 + [polyamine-binding protein]Side 1.. Its function is as follows. Part of the ABC transporter complex PotABCD involved in spermidine/putrescine import. Responsible for energy coupling to the transport system. The protein is Spermidine/putrescine import ATP-binding protein PotA of Lactobacillus johnsonii (strain CNCM I-12250 / La1 / NCC 533).